We begin with the raw amino-acid sequence, 337 residues long: N-acetyl-gamma-glutamyl-phosphate reductase (337 aa).

Residue C155 is part of the active site.

It belongs to the NAGSA dehydrogenase family. Type 1 subfamily.

Its subcellular location is the cytoplasm. It catalyses the reaction N-acetyl-L-glutamate 5-semialdehyde + phosphate + NADP(+) = N-acetyl-L-glutamyl 5-phosphate + NADPH + H(+). It functions in the pathway amino-acid biosynthesis; L-arginine biosynthesis; N(2)-acetyl-L-ornithine from L-glutamate: step 3/4. Functionally, catalyzes the NADPH-dependent reduction of N-acetyl-5-glutamyl phosphate to yield N-acetyl-L-glutamate 5-semialdehyde. This is N-acetyl-gamma-glutamyl-phosphate reductase from Alteromonas mediterranea (strain DSM 17117 / CIP 110805 / LMG 28347 / Deep ecotype).